The chain runs to 410 residues: Pyrophosphate--fructose 6-phosphate 1-phosphotransferase (410 aa).

Gly-12 is a diphosphate binding site. Mg(2+) is bound at residue Asp-121. Residues 149–151, 194–196, Glu-266, and 323–326 contribute to the substrate site; these read TID, MGR, and YFSR. Asp-151 (proton acceptor) is an active-site residue.

It belongs to the phosphofructokinase type A (PFKA) family. PPi-dependent PFK group II subfamily. Clade 'P' sub-subfamily. Homodimer or homotetramer. The cofactor is Mg(2+).

It localises to the cytoplasm. It catalyses the reaction beta-D-fructose 6-phosphate + diphosphate = beta-D-fructose 1,6-bisphosphate + phosphate + H(+). It participates in carbohydrate degradation; glycolysis; D-glyceraldehyde 3-phosphate and glycerone phosphate from D-glucose: step 3/4. Its activity is regulated as follows. Non-allosteric. In terms of biological role, catalyzes the phosphorylation of D-fructose 6-phosphate, the first committing step of glycolysis. Uses inorganic phosphate (PPi) as phosphoryl donor instead of ATP like common ATP-dependent phosphofructokinases (ATP-PFKs), which renders the reaction reversible, and can thus function both in glycolysis and gluconeogenesis. Consistently, PPi-PFK can replace the enzymes of both the forward (ATP-PFK) and reverse (fructose-bisphosphatase (FBPase)) reactions. This is Pyrophosphate--fructose 6-phosphate 1-phosphotransferase from Mastigamoeba balamuthi (Phreatamoeba balamuthi).